The following is a 391-amino-acid chain: Thioredoxin-interacting protein (391 aa).

A Glycyl lysine isopeptide (Lys-Gly) (interchain with G-Cter in ubiquitin) cross-link involves residue Lys212. The residue at position 361 (Ser361) is a Phosphoserine.

Belongs to the arrestin family. As to quaternary structure, homodimer; disulfide-linked. Interacts with TXN/thioredoxin through its redox-active site. Interacts with transcriptional repressors ZBTB16, ZBTB32 and HDAC1. Interacts with DDIT4. Post-translationally, ubiquitinated; undergoes heterotypic 'Lys-48'-/'Lys-63'-branched polyubiquitination catalyzed by ITCH and UBR5 resulting in proteasomal degradation. Deubiquitinated by USP5, leading to TXNIP stabilization.

The protein localises to the cytoplasm. Functionally, may act as an oxidative stress mediator by inhibiting thioredoxin activity or by limiting its bioavailability. Interacts with COPS5 and restores COPS5-induced suppression of CDKN1B stability, blocking the COPS5-mediated translocation of CDKN1B from the nucleus to the cytoplasm. Functions as a transcriptional repressor, possibly by acting as a bridge molecule between transcription factors and corepressor complexes, and over-expression will induce G0/G1 cell cycle arrest. Required for the maturation of natural killer cells. Acts as a suppressor of tumor cell growth. Inhibits the proteasomal degradation of DDIT4, and thereby contributes to the inhibition of the mammalian target of rapamycin complex 1 (mTORC1). This chain is Thioredoxin-interacting protein (TXNIP), found in Sus scrofa (Pig).